Reading from the N-terminus, the 466-residue chain is Soluble pyridine nucleotide transhydrogenase (466 aa).

36 to 45 (ERYHNVGGGC) is a binding site for FAD.

It belongs to the class-I pyridine nucleotide-disulfide oxidoreductase family. It depends on FAD as a cofactor.

The protein resides in the cytoplasm. It carries out the reaction NAD(+) + NADPH = NADH + NADP(+). Its function is as follows. Conversion of NADPH, generated by peripheral catabolic pathways, to NADH, which can enter the respiratory chain for energy generation. This chain is Soluble pyridine nucleotide transhydrogenase, found in Enterobacter sp. (strain 638).